Here is a 293-residue protein sequence, read N- to C-terminus: Formamidopyrimidine-DNA glycosylase (293 aa).

Proline 2 functions as the Schiff-base intermediate with DNA in the catalytic mechanism. The Proton donor role is filled by glutamate 3. The Proton donor; for beta-elimination activity role is filled by lysine 58. DNA contacts are provided by histidine 104, arginine 127, and arginine 170. Residues 257–293 (SVYGREGKPCRNPACGGTVERVVQSGRSTFFCASCQT) form an FPG-type zinc finger. Arginine 283 serves as the catalytic Proton donor; for delta-elimination activity.

This sequence belongs to the FPG family. As to quaternary structure, monomer. The cofactor is Zn(2+).

The enzyme catalyses Hydrolysis of DNA containing ring-opened 7-methylguanine residues, releasing 2,6-diamino-4-hydroxy-5-(N-methyl)formamidopyrimidine.. It carries out the reaction 2'-deoxyribonucleotide-(2'-deoxyribose 5'-phosphate)-2'-deoxyribonucleotide-DNA = a 3'-end 2'-deoxyribonucleotide-(2,3-dehydro-2,3-deoxyribose 5'-phosphate)-DNA + a 5'-end 5'-phospho-2'-deoxyribonucleoside-DNA + H(+). Involved in base excision repair of DNA damaged by oxidation or by mutagenic agents. Acts as a DNA glycosylase that recognizes and removes damaged bases. Has a preference for oxidized purines, such as 7,8-dihydro-8-oxoguanine (8-oxoG). Has AP (apurinic/apyrimidinic) lyase activity and introduces nicks in the DNA strand. Cleaves the DNA backbone by beta-delta elimination to generate a single-strand break at the site of the removed base with both 3'- and 5'-phosphates. The polypeptide is Formamidopyrimidine-DNA glycosylase (Brucella ovis (strain ATCC 25840 / 63/290 / NCTC 10512)).